The sequence spans 91 residues: Small ribosomal subunit protein uS19 (91 aa).

It belongs to the universal ribosomal protein uS19 family.

Functionally, protein S19 forms a complex with S13 that binds strongly to the 16S ribosomal RNA. This is Small ribosomal subunit protein uS19 from Pseudoalteromonas atlantica (strain T6c / ATCC BAA-1087).